The sequence spans 529 residues: Bifunctional purine biosynthesis protein PurH (529 aa).

The MGS-like domain occupies 2 to 149 (TDLHPVRRAL…KNHAFVNVVV (148 aa)).

Belongs to the PurH family.

It catalyses the reaction (6R)-10-formyltetrahydrofolate + 5-amino-1-(5-phospho-beta-D-ribosyl)imidazole-4-carboxamide = 5-formamido-1-(5-phospho-D-ribosyl)imidazole-4-carboxamide + (6S)-5,6,7,8-tetrahydrofolate. It carries out the reaction IMP + H2O = 5-formamido-1-(5-phospho-D-ribosyl)imidazole-4-carboxamide. It participates in purine metabolism; IMP biosynthesis via de novo pathway; 5-formamido-1-(5-phospho-D-ribosyl)imidazole-4-carboxamide from 5-amino-1-(5-phospho-D-ribosyl)imidazole-4-carboxamide (10-formyl THF route): step 1/1. Its pathway is purine metabolism; IMP biosynthesis via de novo pathway; IMP from 5-formamido-1-(5-phospho-D-ribosyl)imidazole-4-carboxamide: step 1/1. In Ruegeria sp. (strain TM1040) (Silicibacter sp.), this protein is Bifunctional purine biosynthesis protein PurH.